A 494-amino-acid chain; its full sequence is Aspartyl/glutamyl-tRNA(Asn/Gln) amidotransferase subunit B (494 aa).

Belongs to the GatB/GatE family. GatB subfamily. Heterotrimer of A, B and C subunits.

The enzyme catalyses L-glutamyl-tRNA(Gln) + L-glutamine + ATP + H2O = L-glutaminyl-tRNA(Gln) + L-glutamate + ADP + phosphate + H(+). It carries out the reaction L-aspartyl-tRNA(Asn) + L-glutamine + ATP + H2O = L-asparaginyl-tRNA(Asn) + L-glutamate + ADP + phosphate + 2 H(+). Functionally, allows the formation of correctly charged Asn-tRNA(Asn) or Gln-tRNA(Gln) through the transamidation of misacylated Asp-tRNA(Asn) or Glu-tRNA(Gln) in organisms which lack either or both of asparaginyl-tRNA or glutaminyl-tRNA synthetases. The reaction takes place in the presence of glutamine and ATP through an activated phospho-Asp-tRNA(Asn) or phospho-Glu-tRNA(Gln). This chain is Aspartyl/glutamyl-tRNA(Asn/Gln) amidotransferase subunit B, found in Synechococcus sp. (strain ATCC 27144 / PCC 6301 / SAUG 1402/1) (Anacystis nidulans).